The following is a 280-amino-acid chain: Thioredoxin-related transmembrane protein 1 (280 aa).

The N-terminal stretch at methionine 1–glycine 26 is a signal peptide. One can recognise a Thioredoxin domain in the interval arginine 27–tryptophan 132. Topologically, residues arginine 27 to serine 180 are extracellular. Residues cysteine 56 and cysteine 59 each act as nucleophile in the active site. A disulfide bridge connects residues cysteine 56 and cysteine 59. A helical transmembrane segment spans residues tyrosine 181 to alanine 203. Residues aspartate 204–serine 280 lie on the Cytoplasmic side of the membrane. Residues cysteine 205 and cysteine 207 are each lipidated (S-palmitoyl cysteine). The interval proline 218 to serine 280 is disordered. Residues serine 228, serine 247, serine 270, serine 274, and serine 280 each carry the phosphoserine modification. Residues glutamate 237–glutamate 252 are compositionally biased toward acidic residues.

In terms of assembly, interacts with ATP2A2. Post-translationally, palmitoylated; palmitoylation is required for localization to mitochondria-associated endoplasmic reticulum membrane (MAM). Ubiquitous. Highly expressed in kidney, liver, placenta and lung.

Its subcellular location is the endoplasmic reticulum membrane. It is found in the mitochondrion membrane. It localises to the secreted. It catalyses the reaction Catalyzes the rearrangement of -S-S- bonds in proteins.. Thiredoxin domain-containing protein that participates in various redox reactions through the reversible oxidation of its active center dithiol to a disulfide and catalyze dithiol-disulfide exchange reactions. Acts as a key inhibitor of the alternative triglyceride biosynthesis pathway by inhibiting the activity of TMEM68/DIESL at the endoplasmic reticulum, thereby restricting accumulation of triacylglycerol. The alternative triglyceride biosynthesis pathway mediates formation of triacylglycerol from diacylglycerol and membrane phospholipids. Acts as a protein disulfide isomerase by catalyzing formation or reduction of disulfide bonds. Specifically mediates formation of disulfide bonds of transmembrane proteins at the endoplasmic reticulum membrane. Involved in endoplasmic reticulum-associated degradation (ERAD) via its protein disulfide isomerase activity by acting on folding-defective polypeptides at the endoplasmic reticulum membrane. Acts as a negative regulator of platelet aggregation following secretion in the extracellular space. Acts as a regulator of endoplasmic reticulum-mitochondria contact sites via its ability to regulate redox signals. Regulates endoplasmic reticulum-mitochondria Ca(2+) flux. In Homo sapiens (Human), this protein is Thioredoxin-related transmembrane protein 1.